A 203-amino-acid polypeptide reads, in one-letter code: Endo-type membrane-bound lytic murein transglycosylase A (203 aa).

The N-terminal stretch at 1 to 15 is a signal peptide; it reads MKLRWFAFLIVLLAG. Residue cysteine 16 is the site of N-palmitoyl cysteine attachment. Cysteine 16 is lipidated: S-diacylglycerol cysteine.

This sequence belongs to the transglycosylase Slt family.

It localises to the cell outer membrane. It carries out the reaction Endolytic cleavage of the (1-&gt;4)-beta-glycosidic linkage between N-acetylmuramic acid (MurNAc) and N-acetylglucosamine (GlcNAc) residues in peptidoglycan with concomitant formation of a 1,6-anhydrobond in the MurNAc residue.. Its function is as follows. Murein-degrading enzyme. May play a role in recycling of muropeptides during cell elongation and/or cell division. Preferentially cleaves at a distance of more than two disaccharide units from the ends of the glycan chain. The chain is Endo-type membrane-bound lytic murein transglycosylase A from Escherichia coli O1:K1 / APEC.